A 442-amino-acid chain; its full sequence is Adenylosuccinate synthetase (442 aa).

Residues G30–K36 and G58–T60 contribute to the GTP site. D31 functions as the Proton acceptor in the catalytic mechanism. Residues D31 and G58 each contribute to the Mg(2+) site. IMP is bound by residues D31 to K34, N56 to H59, T148, R162, N241, T256, and R320. H59 (proton donor) is an active-site residue. T316–R322 contributes to the substrate binding site. GTP is bound by residues R322, K348–D350, and G430–G432.

Belongs to the adenylosuccinate synthetase family. In terms of assembly, homodimer. Mg(2+) is required as a cofactor.

It is found in the cytoplasm. It catalyses the reaction IMP + L-aspartate + GTP = N(6)-(1,2-dicarboxyethyl)-AMP + GDP + phosphate + 2 H(+). It participates in purine metabolism; AMP biosynthesis via de novo pathway; AMP from IMP: step 1/2. Its function is as follows. Plays an important role in the de novo pathway and in the salvage pathway of purine nucleotide biosynthesis. Catalyzes the first committed step in the biosynthesis of AMP from IMP. The protein is Adenylosuccinate synthetase of Trichoplax adhaerens (Trichoplax reptans).